Consider the following 91-residue polypeptide: Putative antitoxin YutD (91 aa).

Cysteines 77 and 81 form a disulfide.

In terms of assembly, homodimer, probably forms a complex with cognate toxin YutE.

Probable antitoxin component of a putative type VII toxin-antitoxin (TA) system. Probably neutralizes cognate toxin YutE. The chain is Putative antitoxin YutD (yutD) from Bacillus subtilis (strain 168).